A 460-amino-acid chain; its full sequence is GTPase Der (460 aa).

2 EngA-type G domains span residues 3–167 and 189–364; these read FTFA…PEPD and IRVA…ATWN. GTP-binding positions include 9–16, 56–60, 119–122, 195–202, 242–246, and 307–310; these read GRPNVGKS, DTAGL, NKSE, GRPNAGKS, and NKWD. The 85-residue stretch at 365–449 folds into the KH-like domain; that stretch reads RRVPTAALNR…PVRIMLREKA (85 aa).

Belongs to the TRAFAC class TrmE-Era-EngA-EngB-Septin-like GTPase superfamily. EngA (Der) GTPase family. Associates with the 50S ribosomal subunit.

In terms of biological role, GTPase that plays an essential role in the late steps of ribosome biogenesis. The polypeptide is GTPase Der (Rhodopseudomonas palustris (strain BisA53)).